Here is a 488-residue protein sequence, read N- to C-terminus: Glutamyl-tRNA(Gln) amidotransferase subunit A (488 aa).

Residues K77 and S152 each act as charge relay system in the active site. The active-site Acyl-ester intermediate is the S176.

This sequence belongs to the amidase family. GatA subfamily. Heterotrimer of A, B and C subunits.

It catalyses the reaction L-glutamyl-tRNA(Gln) + L-glutamine + ATP + H2O = L-glutaminyl-tRNA(Gln) + L-glutamate + ADP + phosphate + H(+). Its function is as follows. Allows the formation of correctly charged Gln-tRNA(Gln) through the transamidation of misacylated Glu-tRNA(Gln) in organisms which lack glutaminyl-tRNA synthetase. The reaction takes place in the presence of glutamine and ATP through an activated gamma-phospho-Glu-tRNA(Gln). The protein is Glutamyl-tRNA(Gln) amidotransferase subunit A of Streptococcus pneumoniae (strain JJA).